A 66-amino-acid chain; its full sequence is Beta-toxin Ct71 (66 aa).

The 66-residue stretch at 1 to 66 (KEGYIVNYHD…VWPLPKKTCN (66 aa)) folds into the LCN-type CS-alpha/beta domain. 4 cysteine pairs are disulfide-bonded: Cys12-Cys65, Cys16-Cys41, Cys25-Cys46, and Cys29-Cys48. At Asn66 the chain carries Asparagine amide.

It belongs to the long (4 C-C) scorpion toxin superfamily. Sodium channel inhibitor family. Beta subfamily. Expressed by the venom gland.

Its subcellular location is the secreted. Beta toxins bind voltage-independently at site-4 of sodium channels (Nav) and shift the voltage of activation toward more negative potentials thereby affecting sodium channel activation and promoting spontaneous and repetitive firing. Lethal to mice. This chain is Beta-toxin Ct71, found in Centruroides tecomanus (Scorpion).